Here is a 354-residue protein sequence, read N- to C-terminus: CREB/ATF bZIP transcription factor (354 aa).

3 disordered regions span residues 1 to 95 (MRHS…PGEE), 113 to 156 (PRQP…AAEM), and 171 to 214 (GGCS…RKAA). S50 is subject to Phosphoserine. Low complexity predominate over residues 121-132 (DPGLSSPGPLSS). Gly residues-rich tracts occupy residues 133-143 (SGGGSDSGGLW) and 190-199 (PGGGGGGGSG). The 64-residue stretch at 204-267 (QAATKSPRKA…QALQEESRYL (64 aa)) folds into the bZIP domain. Residues 205–214 (AATKSPRKAA) show a composition bias toward low complexity. Residues 219–226 (RLNRLKKK) are basic motif. Positions 232 to 267 (LESRVRGLAAENQELRAENRELGKRVQALQEESRYL) are leucine-zipper. The short motif at 303 to 306 (DHDY) is the HCFC1-binding motif (HBM) element.

Belongs to the bZIP family. ATF subfamily. In terms of assembly, interacts with HCFC1; the interaction inhibits CREB3 transcriptional activity. Interacts with CREB3; the interaction occurs only in combination with HCFC1. In terms of tissue distribution, in adults, expressed most abundantly in heart, liver and skeletal muscle, moderately abundant in kidney and pancreas, and barely detectable in lung. In fetal tissues, expressed most abundantly in kidney and very low amounts in heart, lung and liver.

It is found in the nucleus. Its function is as follows. Strongly activates transcription when bound to HCFC1. Suppresses the expression of HSV proteins in cells infected with the virus in a HCFC1-dependent manner. Also suppresses the HCFC1-dependent transcriptional activation by CREB3 and reduces the amount of CREB3 in the cell. Able to down-regulate expression of some cellular genes in CREBZF-expressing cells. The polypeptide is CREB/ATF bZIP transcription factor (CREBZF) (Homo sapiens (Human)).